Reading from the N-terminus, the 357-residue chain is Chorismate synthase (357 aa).

The NADP(+) site is built by arginine 48 and arginine 54. FMN is bound by residues 125–127, 243–244, glycine 283, 298–302, and arginine 324; these read RSS, NA, and KPTSS.

This sequence belongs to the chorismate synthase family. Homotetramer. FMNH2 is required as a cofactor.

The enzyme catalyses 5-O-(1-carboxyvinyl)-3-phosphoshikimate = chorismate + phosphate. The protein operates within metabolic intermediate biosynthesis; chorismate biosynthesis; chorismate from D-erythrose 4-phosphate and phosphoenolpyruvate: step 7/7. In terms of biological role, catalyzes the anti-1,4-elimination of the C-3 phosphate and the C-6 proR hydrogen from 5-enolpyruvylshikimate-3-phosphate (EPSP) to yield chorismate, which is the branch point compound that serves as the starting substrate for the three terminal pathways of aromatic amino acid biosynthesis. This reaction introduces a second double bond into the aromatic ring system. The sequence is that of Chorismate synthase from Pasteurella multocida (strain Pm70).